The chain runs to 192 residues: Fe/S biogenesis protein NfuA (192 aa).

Positions 149 and 152 each coordinate [4Fe-4S] cluster.

This sequence belongs to the NfuA family. In terms of assembly, homodimer. Requires [4Fe-4S] cluster as cofactor.

In terms of biological role, involved in iron-sulfur cluster biogenesis. Binds a 4Fe-4S cluster, can transfer this cluster to apoproteins, and thereby intervenes in the maturation of Fe/S proteins. Could also act as a scaffold/chaperone for damaged Fe/S proteins. The chain is Fe/S biogenesis protein NfuA from Shewanella sp. (strain ANA-3).